A 277-amino-acid chain; its full sequence is Undecaprenyl-diphosphatase (277 aa).

6 helical membrane passes run F47–I67, A85–I105, W108–W128, F187–Y207, V218–L238, and F249–I269.

The protein belongs to the UppP family.

It localises to the cell inner membrane. It catalyses the reaction di-trans,octa-cis-undecaprenyl diphosphate + H2O = di-trans,octa-cis-undecaprenyl phosphate + phosphate + H(+). Catalyzes the dephosphorylation of undecaprenyl diphosphate (UPP). Confers resistance to bacitracin. The protein is Undecaprenyl-diphosphatase of Pseudomonas aeruginosa (strain ATCC 15692 / DSM 22644 / CIP 104116 / JCM 14847 / LMG 12228 / 1C / PRS 101 / PAO1).